Here is a 67-residue protein sequence, read N- to C-terminus: N-(5'-phosphoribosyl)anthranilate isomerase (67 aa).

The protein belongs to the TrpF family.

It carries out the reaction N-(5-phospho-beta-D-ribosyl)anthranilate = 1-(2-carboxyphenylamino)-1-deoxy-D-ribulose 5-phosphate. It participates in amino-acid biosynthesis; L-tryptophan biosynthesis; L-tryptophan from chorismate: step 3/5. The chain is N-(5'-phosphoribosyl)anthranilate isomerase (trpF) from Methanococcus voltae.